Reading from the N-terminus, the 368-residue chain is Probable dual-specificity RNA methyltransferase RlmN (368 aa).

Glutamate 100 (proton acceptor) is an active-site residue. The Radical SAM core domain occupies 106-344 (QHYGLSVCVT…CVVRQEHGTD (239 aa)). A disulfide bridge connects residues cysteine 113 and cysteine 349. [4Fe-4S] cluster contacts are provided by cysteine 120, cysteine 124, and cysteine 127. Residues 172-173 (GE), serine 204, 227-229 (SLH), and asparagine 305 each bind S-adenosyl-L-methionine. The active-site S-methylcysteine intermediate is cysteine 349.

Belongs to the radical SAM superfamily. RlmN family. It depends on [4Fe-4S] cluster as a cofactor.

The protein resides in the cytoplasm. It carries out the reaction adenosine(2503) in 23S rRNA + 2 reduced [2Fe-2S]-[ferredoxin] + 2 S-adenosyl-L-methionine = 2-methyladenosine(2503) in 23S rRNA + 5'-deoxyadenosine + L-methionine + 2 oxidized [2Fe-2S]-[ferredoxin] + S-adenosyl-L-homocysteine. The enzyme catalyses adenosine(37) in tRNA + 2 reduced [2Fe-2S]-[ferredoxin] + 2 S-adenosyl-L-methionine = 2-methyladenosine(37) in tRNA + 5'-deoxyadenosine + L-methionine + 2 oxidized [2Fe-2S]-[ferredoxin] + S-adenosyl-L-homocysteine. Functionally, specifically methylates position 2 of adenine 2503 in 23S rRNA and position 2 of adenine 37 in tRNAs. This chain is Probable dual-specificity RNA methyltransferase RlmN, found in Streptococcus agalactiae serotype V (strain ATCC BAA-611 / 2603 V/R).